A 194-amino-acid chain; its full sequence is uncharacterized protein (194 aa).

One can recognise an HTH tetR-type domain in the interval 6 to 66; the sequence is EFDTALVLHR…SAVKSYLEGK (61 aa). The segment at residues 29 to 48 is a DNA-binding region (H-T-H motif); sequence SLQDLLSHLGIARQSLYDTY.

This is an uncharacterized protein from Bacillus subtilis (strain 168).